The chain runs to 575 residues: Phosphoenolpyruvate-protein phosphotransferase (575 aa).

Position 122 is a phosphotyrosine (Y122). H189 functions as the Tele-phosphohistidine intermediate in the catalytic mechanism. 2 residues coordinate phosphoenolpyruvate: R296 and R332. Mg(2+) contacts are provided by E431 and D455. Phosphoenolpyruvate-binding positions include 454 to 455 (ND) and R465. Catalysis depends on C502, which acts as the Proton donor.

Belongs to the PEP-utilizing enzyme family. In terms of assembly, homodimer. Interacts with the pole-localizer protein TmaR. Binding to TmaR is reversible as long as TmaR can get phosphorylated, whereas binding to non-phosphorylated TmaR is very strong and shifts the equilibrium toward binding. Mg(2+) is required as a cofactor. In terms of processing, phosphorylated on Tyr-122. Phosphorylation on Tyr-122 is important for polar localization but not for interaction with TmaR and for activity.

The protein localises to the cytoplasm. The catalysed reaction is L-histidyl-[protein] + phosphoenolpyruvate = N(pros)-phospho-L-histidyl-[protein] + pyruvate. Its activity is regulated as follows. Inhibited by oxalate. General (non sugar-specific) component of the phosphoenolpyruvate-dependent sugar phosphotransferase system (sugar PTS). This major carbohydrate active-transport system catalyzes the phosphorylation of incoming sugar substrates concomitantly with their translocation across the cell membrane. Enzyme I transfers the phosphoryl group from phosphoenolpyruvate (PEP) to the phosphoryl carrier protein (HPr). Can also use (Z)-3-fluoro-PEP (ZFPEP), (Z)-3-methyl-PEP (ZMePEP), (Z)-3-chloro-PEP (ZClPEP) and (E)-3-chloro-PEP (EClPEP) as alternative phosphoryl donors. This is Phosphoenolpyruvate-protein phosphotransferase from Escherichia coli (strain K12).